Consider the following 145-residue polypeptide: Hemoglobin subunit beta (145 aa).

The Globin domain occupies 1–145; sequence MLTAEEKAAV…VANALAHRYH (145 aa). Thr-11 is modified (phosphothreonine). Lys-58 is subject to N6-acetyllysine. Residue His-62 coordinates heme b. Lys-81 is modified (N6-acetyllysine). A heme b-binding site is contributed by His-91. Residue Cys-92 is modified to S-nitrosocysteine.

Belongs to the globin family. As to quaternary structure, heterotetramer of two alpha chains and two beta chains. As to expression, red blood cells.

Its function is as follows. Involved in oxygen transport from the lung to the various peripheral tissues. The sequence is that of Hemoglobin subunit beta (HBB) from Alces alces alces (European moose).